A 1025-amino-acid chain; its full sequence is Presequence protease, mitochondrial (1025 aa).

Position 90 (H90) interacts with Zn(2+). The Proton acceptor role is filled by E93. Residue H94 coordinates Zn(2+). Residue E166 is part of the active site. E197 is a binding site for Zn(2+).

It belongs to the peptidase M16 family. PreP subfamily. Monomer and homodimer; homodimerization is induced by binding of the substrate. Requires Zn(2+) as cofactor.

It localises to the mitochondrion intermembrane space. The protein resides in the mitochondrion matrix. Functionally, degrades mitochondrial transit peptides after their cleavage in the intermembrane space or in the matrix, and presequence peptides; clearance of these peptides is required to keep the presequence processing machinery running. Preferentially cleaves the N-terminal side of paired basic amino acid residues. Also degrades other unstructured peptides. May function as an ATP-dependent peptidase as opposed to a metalloendopeptidase. The chain is Presequence protease, mitochondrial (cym1) from Aspergillus oryzae (strain ATCC 42149 / RIB 40) (Yellow koji mold).